A 499-amino-acid chain; its full sequence is Ribulose bisphosphate carboxylase large chain (499 aa).

Positions 139 and 189 each coordinate substrate. Residue Lys191 is the Proton acceptor of the active site. Lys193 contacts substrate. Mg(2+) is bound by residues Lys217, Asp219, and Glu220. Lys217 carries the post-translational modification N6-carboxylysine. The active-site Proton acceptor is the His309. Substrate is bound by residues Arg310, His342, and Ser394.

Belongs to the RuBisCO large chain family. Type I subfamily. In terms of assembly, heterohexadecamer of 8 large chains and 8 small chains. It depends on Mg(2+) as a cofactor.

It catalyses the reaction 2 (2R)-3-phosphoglycerate + 2 H(+) = D-ribulose 1,5-bisphosphate + CO2 + H2O. It carries out the reaction D-ribulose 1,5-bisphosphate + O2 = 2-phosphoglycolate + (2R)-3-phosphoglycerate + 2 H(+). Its function is as follows. RuBisCO catalyzes two reactions: the carboxylation of D-ribulose 1,5-bisphosphate, the primary event in carbon dioxide fixation, as well as the oxidative fragmentation of the pentose substrate. Both reactions occur simultaneously and in competition at the same active site. This is Ribulose bisphosphate carboxylase large chain from Paraburkholderia xenovorans (strain LB400).